The following is a 77-amino-acid chain: MLRINVCFDASKKVPAKIQQALRAEIEKEILSNYERGVVSVGKGSSAEVSISGVDDDEKKVIMQKLEDIWQSDSWLP.

Belongs to the DinI family.

In Salmonella typhimurium, this protein is Protein ImpC (impC).